The primary structure comprises 488 residues: MRAPLSTHDRCLVPDTYDIRLTITGNDGDKYPAKQHARRAAMKLGVSAGLVYLVGQPTINWGDSDQPRPFRQRRYFYYLSGVDEADCYLTYDIHSDLLTLYVPDFDLRHAIWMGPTLTIDEARHRYDVDRVCYFSSLQGHLESWIDKHNNSSPIYILHDTQKPHVPSRENVYLDGEHLLPAMDAARMVKDDYEIRMIRKANQISALAHRKVLENIHRMTNETEIEGLFLATCVSHGAKNQSYEIIAGSGKNAATLHYVKNNEPLHGRQLVCLDAGAEWDCYASDVTRTIPLGPDWASEYVRNIYCLVEKMQETCISQIRRGVTMKSLQDSAHFIAIQGLKDLGVLHDYDVLEIFHSGASAVFFPHGLGHHVGLEVHDVSVQPNAASAAAEGPRQTFFVPMATQSSPGLEPGMVVTIEPGVYFSELAIANARKQPLAKYINFDVAEKYIPIGGVRIEDDILVTHSGYENLTTAPKGEEMLEIIRRAIDN.

Mn(2+) contacts are provided by aspartate 273, aspartate 284, glutamate 417, and glutamate 456.

Belongs to the peptidase M24B family. Requires Mn(2+) as cofactor.

The catalysed reaction is Release of any N-terminal amino acid, including proline, that is linked to proline, even from a dipeptide or tripeptide.. Its function is as follows. Catalyzes the removal of a penultimate prolyl residue from the N-termini of peptides. The chain is Probable Xaa-Pro aminopeptidase ATEG_00858 from Aspergillus terreus (strain NIH 2624 / FGSC A1156).